Consider the following 200-residue polypeptide: Probable GTP-binding protein EngB (200 aa).

Residues 24–199 (EGAEVAFAGR…RGVIGGWLGL (176 aa)) enclose the EngB-type G domain. Residues 32 to 39 (GRSNAGKS), 59 to 63 (GRTQQ), 77 to 80 (DLPG), 144 to 147 (TKAD), and 178 to 180 (FSG) contribute to the GTP site. 2 residues coordinate Mg(2+): Ser-39 and Thr-61.

This sequence belongs to the TRAFAC class TrmE-Era-EngA-EngB-Septin-like GTPase superfamily. EngB GTPase family. Mg(2+) is required as a cofactor.

Functionally, necessary for normal cell division and for the maintenance of normal septation. In Stenotrophomonas maltophilia (strain K279a), this protein is Probable GTP-binding protein EngB.